Here is a 360-residue protein sequence, read N- to C-terminus: Inward rectifier potassium channel 13 (360 aa).

The Cytoplasmic portion of the chain corresponds to 1 to 50; the sequence is MDSSNCKVNAPLLSQRHRRMVTKDGHSTLQMDGAQRGLVYLRDAWGILMD. A helical transmembrane segment spans residues 51-77; sequence MRWRWMMLVFSASFVVHWLVFAVLWYA. Topologically, residues 78–105 are extracellular; sequence VAEMNGDLEIDHDVPPENHTICVKHITS. An intramembrane region (helical; Pore-forming) is located at residues 106-122; sequence FTAAFSFSLETQLTIGY. The Selectivity filter motif lies at 119 to 124; the sequence is TIGYGT. Residues 123–131 are Extracellular-facing; sequence GTMFPSGDC. A helical membrane pass occupies residues 132-157; that stretch reads PSAIALLAIQMLLGLMLEAFITGAFV. Residues 158–360 are Cytoplasmic-facing; that stretch reads AKIARPKNRA…FQIAETGLTE (203 aa). At serine 287 the chain carries Phosphoserine; by PKA.

This sequence belongs to the inward rectifier-type potassium channel (TC 1.A.2.1) family. KCNJ13 subfamily. Homotetramer. Interacts with RAB28; the interaction may facilitate cone outer segments phagocytosis. In terms of processing, phosphorylation at Ser-287 by PKA increases ionic currents. In terms of tissue distribution, expressed in retina.

Its subcellular location is the membrane. The protein localises to the cell membrane. It carries out the reaction K(+)(in) = K(+)(out). Its activity is regulated as follows. Inhibited by Ba(2+) and Cs(+), although sensitivity to those inhibitors is much lower than in other Kir channels. In terms of biological role, inward rectifier potassium channels are characterized by a greater tendency to allow potassium to flow into the cell rather than out of it. Their voltage dependence is regulated by the concentration of extracellular potassium; as external potassium is raised, the voltage range of the channel opening shifts to more positive voltages. The inward rectification is mainly due to the blockage of outward current by internal magnesium. KCNJ13 has a very low single channel conductance, low sensitivity to block by external barium and cesium, and no dependence of its inward rectification properties on the internal blocking particle magnesium. This chain is Inward rectifier potassium channel 13, found in Mus musculus (Mouse).